A 575-amino-acid polypeptide reads, in one-letter code: E3 ubiquitin-protein ligase kcmf-1 (575 aa).

Residues 9–73 form a ZZ-type zinc finger; sequence HEGVSCDGCA…PMQLILSSVD (65 aa). Residues cysteine 14, cysteine 17, cysteine 29, cysteine 32, cysteine 38, cysteine 41, histidine 59, and histidine 63 each contribute to the Zn(2+) site. Disordered stretches follow at residues 277 to 306 and 530 to 575; these read PIYP…DDND and EADE…INID. 2 stretches are compositionally biased toward acidic residues: residues 297 to 306 and 530 to 563; these read SADESEDDND and EADE…ENDS.

The protein belongs to the KCMF1 family.

It localises to the cytoplasm. The protein resides in the late endosome. It is found in the lysosome. The enzyme catalyses S-ubiquitinyl-[E2 ubiquitin-conjugating enzyme]-L-cysteine + [acceptor protein]-L-lysine = [E2 ubiquitin-conjugating enzyme]-L-cysteine + N(6)-ubiquitinyl-[acceptor protein]-L-lysine.. It functions in the pathway protein modification; protein ubiquitination. Functionally, E3 ubiquitin-protein ligase which accepts ubiquitin from an E2 ubiquitin-conjugating enzyme and then transfers it to targeted substrates, promoting their degradation by the proteasome. In Caenorhabditis elegans, this protein is E3 ubiquitin-protein ligase kcmf-1.